Reading from the N-terminus, the 137-residue chain is Small ribosomal subunit protein bS16 (137 aa).

Residues 104-118 (ADEKKKPVLKPKTEK) are compositionally biased toward basic and acidic residues. Residues 104 to 137 (ADEKKKPVLKPKTEKAAPAPEAAAPEAESTEEQA) are disordered. A compositionally biased stretch (low complexity) spans 119–130 (AAPAPEAAAPEA).

It belongs to the bacterial ribosomal protein bS16 family.

The protein is Small ribosomal subunit protein bS16 of Clavibacter michiganensis subsp. michiganensis (strain NCPPB 382).